We begin with the raw amino-acid sequence, 293 residues long: Acetylglutamate kinase (293 aa).

Residues 65-66 (GG), Arg-87, and Asn-188 contribute to the substrate site.

This sequence belongs to the acetylglutamate kinase family. ArgB subfamily.

It is found in the cytoplasm. It carries out the reaction N-acetyl-L-glutamate + ATP = N-acetyl-L-glutamyl 5-phosphate + ADP. The protein operates within amino-acid biosynthesis; L-arginine biosynthesis; N(2)-acetyl-L-ornithine from L-glutamate: step 2/4. Its function is as follows. Catalyzes the ATP-dependent phosphorylation of N-acetyl-L-glutamate. In Symbiobacterium thermophilum (strain DSM 24528 / JCM 14929 / IAM 14863 / T), this protein is Acetylglutamate kinase.